Here is a 585-residue protein sequence, read N- to C-terminus: Bestrophin-1 (585 aa).

Topologically, residues 1–31 are cytoplasmic; the sequence is MTITYTSQVANARLGSFSRLLLCWRGSIYKL. Alanine 10 contributes to the Ca(2+) binding site. A helical transmembrane segment spans residues 32–51; sequence LYGEFFIFLLCYYIIRFIYR. The Extracellular segment spans residues 52 to 60; the sequence is LALTEEQQL. A helical transmembrane segment spans residues 61–82; the sequence is MFEKLTLYCDSYIQLIPISFVL. Over 83-237 the chain is Cytoplasmic; the sequence is GFYVTLVVTR…DWISIPLVYT (155 aa). The helical transmembrane segment at 238-255 threads the bilayer; the sequence is QVVTVAVYSFFLTCLVGR. At 256–274 the chain is on the extracellular side; sequence QFLNPAKAYPGHELDLVVP. Residues 275–288 traverse the membrane as a helical segment; that stretch reads VFTFLQFFFYVGWL. Residues 289–585 lie on the Cytoplasmic side of the membrane; the sequence is KVAEQLINPF…ALENRDEAHS (297 aa). Ca(2+) contacts are provided by glutamine 293, asparagine 296, aspartate 301, and aspartate 304. The auto-inhibitory segment stretch occupies residues 346–379; that stretch reads PYTAASAQFRRASFMGSTFNISLNKEEMEFQPNQ.

It belongs to the anion channel-forming bestrophin (TC 1.A.46) family. Calcium-sensitive chloride channel subfamily. As to quaternary structure, interacts with YWHAG; this interaction promotes the ligand-gated L-glutamate channel activity leading to the positive regulation of NMDA glutamate receptor activity through the L-glutamate secretion.

It is found in the cell membrane. It localises to the basolateral cell membrane. The catalysed reaction is chloride(in) = chloride(out). It carries out the reaction hydrogencarbonate(in) = hydrogencarbonate(out). The enzyme catalyses 4-aminobutanoate(in) = 4-aminobutanoate(out). It catalyses the reaction L-glutamate(out) = L-glutamate(in). Functionally, ligand-gated anion channel that allows the movement of anions across cell membranes when activated by calcium (Ca2+). Allows the movement of chloride and hydrogencarbonate. Found in a partially open conformation leading to significantly smaller chloride movement. Upon F2R/PAR-1 activation, the sequestered calcium is released into the cytosol of astrocytes, leading to the (Ca2+)-dependent release of L-glutamate into the synaptic cleft that targets the neuronal postsynaptic GRIN2A/NMDAR receptor resulting in the synaptic plasticity regulation. Upon activation of the norepinephrine-alpha-1 adrenergic receptor signaling pathway, transports as well D-serine than L-glutamate in a (Ca2+)-dependent manner, leading to activation of adjacent NMDAR receptors and therefore regulates the heterosynaptic long-term depression and metaplasticity during initial memory acquisition. Releases the 4-aminobutanoate neurotransmitter in a (Ca2+)-dependent manner, and participates in its tonic release from cerebellar glial cells. The chain is Bestrophin-1 (BEST1) from Macaca fascicularis (Crab-eating macaque).